A 279-amino-acid chain; its full sequence is Putative pyruvate, phosphate dikinase regulatory protein (279 aa).

Residue 153–160 (GVSRTSKT) participates in ADP binding.

The protein belongs to the pyruvate, phosphate/water dikinase regulatory protein family. PDRP subfamily.

The catalysed reaction is N(tele)-phospho-L-histidyl/L-threonyl-[pyruvate, phosphate dikinase] + ADP = N(tele)-phospho-L-histidyl/O-phospho-L-threonyl-[pyruvate, phosphate dikinase] + AMP + H(+). It catalyses the reaction N(tele)-phospho-L-histidyl/O-phospho-L-threonyl-[pyruvate, phosphate dikinase] + phosphate + H(+) = N(tele)-phospho-L-histidyl/L-threonyl-[pyruvate, phosphate dikinase] + diphosphate. In terms of biological role, bifunctional serine/threonine kinase and phosphorylase involved in the regulation of the pyruvate, phosphate dikinase (PPDK) by catalyzing its phosphorylation/dephosphorylation. The chain is Putative pyruvate, phosphate dikinase regulatory protein from Rhodopseudomonas palustris (strain HaA2).